A 511-amino-acid polypeptide reads, in one-letter code: Bifunctional purine biosynthesis protein PurH (511 aa).

Residues 1–145 enclose the MGS-like domain; that stretch reads MKKRALVSVS…KNHKFVSVIV (145 aa).

The protein belongs to the PurH family.

The enzyme catalyses (6R)-10-formyltetrahydrofolate + 5-amino-1-(5-phospho-beta-D-ribosyl)imidazole-4-carboxamide = 5-formamido-1-(5-phospho-D-ribosyl)imidazole-4-carboxamide + (6S)-5,6,7,8-tetrahydrofolate. It catalyses the reaction IMP + H2O = 5-formamido-1-(5-phospho-D-ribosyl)imidazole-4-carboxamide. It functions in the pathway purine metabolism; IMP biosynthesis via de novo pathway; 5-formamido-1-(5-phospho-D-ribosyl)imidazole-4-carboxamide from 5-amino-1-(5-phospho-D-ribosyl)imidazole-4-carboxamide (10-formyl THF route): step 1/1. The protein operates within purine metabolism; IMP biosynthesis via de novo pathway; IMP from 5-formamido-1-(5-phospho-D-ribosyl)imidazole-4-carboxamide: step 1/1. In Bacillus mycoides (strain KBAB4) (Bacillus weihenstephanensis), this protein is Bifunctional purine biosynthesis protein PurH.